We begin with the raw amino-acid sequence, 466 residues long: Putative chitinase (466 aa).

An N-terminal signal peptide occupies residues 1–17 (MYLTIWLVSILALGTWG). Residues 20–380 (FNRFCHYNSW…MAVIHGLNAY (361 aa)) form the GH18 domain. A disulfide bridge connects residues cysteine 24 and cysteine 49. The Proton donor role is filled by glutamate 141. Residues 408 to 442 (NYRRRNQQEKVAEMEQRIRHLEQELQQSMGNMAYE) adopt a coiled-coil conformation.

Belongs to the glycosyl hydrolase 18 family. In terms of tissue distribution, prismatic layer of shell (at protein level). Expressed primarily in the mantle with highest level in the mantle edge and lower level in the mantle pallium.

It is found in the secreted. The enzyme catalyses Random endo-hydrolysis of N-acetyl-beta-D-glucosaminide (1-&gt;4)-beta-linkages in chitin and chitodextrins.. This is Putative chitinase from Pinctada maxima (Silver-lipped pearl oyster).